The primary structure comprises 1307 residues: Light-sensor Protein kinase (1307 aa).

The GAF domain occupies 215–394 (DIELLCDTIV…VFGMQLNLHV (180 aa)). Cys-320 is a phytochromobilin binding site. The PAS domain occupies 609 to 680 (LANEMSRVLE…RLLSLALQGE (72 aa)). The 57-residue stretch at 683 to 739 (QNVEIKLKTFGTQTTERAVILIVNACCSRDASDFVVGVFFVGQDVTEQRMFMDRFTR) folds into the PAC domain. Residues 779–1003 (DHATGSVERL…WSFSEKFFQW (225 aa)) form a hinge region. The region spanning 1004 to 1307 (IQITGSLGSG…DSYPSTEEPS (304 aa)) is the Protein kinase domain. Residues 1010–1018 (LGSGSSATV) and Lys-1031 contribute to the ATP site. Residue Asp-1127 is part of the active site.

The protein in the N-terminal section; belongs to the phytochrome family. This sequence in the C-terminal section; belongs to the protein kinase superfamily. Ser/Thr protein kinase family. As to quaternary structure, homodimer. Contains one covalently linked phytochromobilin chromophore.

The protein resides in the cell membrane. The catalysed reaction is L-seryl-[protein] + ATP = O-phospho-L-seryl-[protein] + ADP + H(+). It carries out the reaction L-threonyl-[protein] + ATP = O-phospho-L-threonyl-[protein] + ADP + H(+). Functionally, regulatory photoreceptor which exists in two forms that are reversibly interconvertible by light: the Pr form that absorbs maximally in the red region of the spectrum and the Pfr form that absorbs maximally in the far-red region. Photoconversion of Pr to Pfr induces an array of morphogenic responses, whereas reconversion of Pfr to Pr cancels the induction of those responses. Pfr controls the expression of a number of nuclear genes including those encoding the small subunit of ribulose-bisphosphate carboxylase, chlorophyll A/B binding protein, protochlorophyllide reductase, rRNA, etc. It also controls the expression of its own gene(s) in a negative feedback fashion. The chain is Light-sensor Protein kinase (PHY1) from Ceratodon purpureus (Fire moss).